The chain runs to 539 residues: Phospho-2-dehydro-3-deoxyheptonate aldolase 2, chloroplastic (539 aa).

Disordered stretches follow at residues 1–23 (MALATNSAAVSGGAAAAASSAPQ) and 41–70 (VHAADPAKSNGPVQAAAKASSPSTVAAPEK). A chloroplast-targeting transit peptide spans 1 to 54 (MALATNSAAVSGGAAAAASSAPQPRLAATFLPMRRRTVSAVHAADPAKSNGPVQ). The span at 7 to 21 (SAAVSGGAAAAASSA) shows a compositional bias: low complexity.

Belongs to the class-II DAHP synthase family.

It is found in the plastid. It localises to the chloroplast. It carries out the reaction D-erythrose 4-phosphate + phosphoenolpyruvate + H2O = 7-phospho-2-dehydro-3-deoxy-D-arabino-heptonate + phosphate. It participates in metabolic intermediate biosynthesis; chorismate biosynthesis; chorismate from D-erythrose 4-phosphate and phosphoenolpyruvate: step 1/7. This chain is Phospho-2-dehydro-3-deoxyheptonate aldolase 2, chloroplastic (DAHPS2), found in Oryza sativa subsp. japonica (Rice).